An 824-amino-acid chain; its full sequence is Molybdenum cofactor sulfurase (824 aa).

K274 is subject to N6-(pyridoxal phosphate)lysine. C433 is a catalytic residue. The region spanning C655 to S822 is the MOSC domain.

It belongs to the class-V pyridoxal-phosphate-dependent aminotransferase family. MOCOS subfamily. The cofactor is pyridoxal 5'-phosphate.

It catalyses the reaction Mo-molybdopterin + L-cysteine + AH2 = thio-Mo-molybdopterin + L-alanine + A + H2O. It functions in the pathway cofactor biosynthesis; molybdopterin biosynthesis. Its function is as follows. Sulfurates the molybdenum cofactor. Sulfation of molybdenum is essential for xanthine dehydrogenase (XDH) and aldehyde oxidase (ADO) enzymes in which molybdenum cofactor is liganded by 1 oxygen and 1 sulfur atom in active form. This is Molybdenum cofactor sulfurase (MCSU3) from Oryza sativa subsp. japonica (Rice).